Reading from the N-terminus, the 901-residue chain is Protein translocase subunit SecA (901 aa).

Residues Gln-85, 103 to 107 (GEGKT), and Asp-492 each bind ATP. The segment at 828–901 (GLVTDDGGNP…PKNRRNKKRR (74 aa)) is disordered. The span at 871 to 881 (DGQKPRGEGNR) shows a compositional bias: basic and acidic residues. Basic residues predominate over residues 882–901 (AARRSAASKKPKNRRNKKRR).

The protein belongs to the SecA family. Monomer and homodimer. Part of the essential Sec protein translocation apparatus which comprises SecA, SecYEG and auxiliary proteins SecDF. Other proteins may also be involved.

The protein resides in the cell membrane. It is found in the cytoplasm. The catalysed reaction is ATP + H2O + cellular proteinSide 1 = ADP + phosphate + cellular proteinSide 2.. In terms of biological role, part of the Sec protein translocase complex. Interacts with the SecYEG preprotein conducting channel. Has a central role in coupling the hydrolysis of ATP to the transfer of proteins into and across the cell membrane, serving as an ATP-driven molecular motor driving the stepwise translocation of polypeptide chains across the membrane. This is Protein translocase subunit SecA from Cutibacterium acnes (strain DSM 16379 / KPA171202) (Propionibacterium acnes).